The sequence spans 290 residues: Prepilin leader peptidase/N-methyltransferase (290 aa).

A helical transmembrane segment spans residues 14–34 (LYFSLVFLFSLMIGSFLNVVI). Cysteine 74, cysteine 77, cysteine 99, and cysteine 102 together coordinate Zn(2+). A run of 6 helical transmembrane segments spans residues 106-126 (ISAR…AVAM), 130-150 (PGWG…LTFI), 161-181 (LTLP…FVSL), 185-205 (VIGA…FKLL), 232-252 (PIVL…LILL), and 261-281 (IPFG…GDSI).

Belongs to the peptidase A24 family. Zn(2+) is required as a cofactor.

The protein localises to the cell inner membrane. The catalysed reaction is Typically cleaves a -Gly-|-Phe- bond to release an N-terminal, basic peptide of 5-8 residues from type IV prepilin, and then N-methylates the new N-terminal amino group, the methyl donor being S-adenosyl-L-methionine.. In terms of biological role, plays an essential role in type IV pili and type II pseudopili formation by proteolytically removing the leader sequence from substrate proteins and subsequently monomethylating the alpha-amino group of the newly exposed N-terminal phenylalanine. The sequence is that of Prepilin leader peptidase/N-methyltransferase (tapD) from Aeromonas hydrophila.